Consider the following 202-residue polypeptide: Na(+)-translocating NADH-quinone reductase subunit E (202 aa).

A run of 6 helical transmembrane segments spans residues 11 to 31, 39 to 59, 81 to 101, 114 to 134, 144 to 164, and 180 to 200; these read AVFI…FLAV, FGLG…NNLI, FLKF…LEMA, GIFL…AFMV, VVFG…LAAV, and LGIT…FSGV.

Belongs to the NqrDE/RnfAE family. Composed of six subunits; NqrA, NqrB, NqrC, NqrD, NqrE and NqrF.

It localises to the cell inner membrane. It carries out the reaction a ubiquinone + n Na(+)(in) + NADH + H(+) = a ubiquinol + n Na(+)(out) + NAD(+). In terms of biological role, NQR complex catalyzes the reduction of ubiquinone-1 to ubiquinol by two successive reactions, coupled with the transport of Na(+) ions from the cytoplasm to the periplasm. NqrA to NqrE are probably involved in the second step, the conversion of ubisemiquinone to ubiquinol. This chain is Na(+)-translocating NADH-quinone reductase subunit E, found in Idiomarina loihiensis (strain ATCC BAA-735 / DSM 15497 / L2-TR).